A 1296-amino-acid polypeptide reads, in one-letter code: MEILRGSPALSAFRITKLLSRCQDAHLLVSDIYAEYVHFADVSAPLSADEHARLQRLLQYGPSLPEHPPAGRLLLVTPRPGTISPWSSKATDIAHNCGLSQILRLERGLAFSIQGPDLNESQWKQLAALLHDRMMEAVFTDLQQAEQLFSHHQPAPVQRVDILGQGRSALEQANIKLGLALAQDEIDYLLTAFTGLGRNPTDIELYMFAQANSEHCRHKIFNADWVIDGVVQPKTLFKMIKNTFEHTPDYVLSAYKDNAAVMEGSQVGRFYATAEKGIYDYHQEEAHILMKVETHNHPTAISPWPGAATGSGGEIRDEGATGRGAKPKAGLVGFSVSNLRIPGFEQPWEENFGKPDRIVTALDIMTEGPLGGAAFNNEFGRPALLGYFRTYEERVNSHNGIELRGYHKPIMLAGGLGNIRADHVQKGEITVGAKLVVLGGPSMNIGLGGGAASSMASGQSDADLDFASVQRDNPEMERRCQEVIDRCWQLGEYNPILFIHDVGAGGLSNAMPELVNDGGRGGRFELRDILNDEPGMSPLEVWCNESQERYVLAVAPAQMALFDEICRRERAPYAVIGEATEEKHLLLNDRHFGNQPIDMPLDVLLGKTPKMLRDVTRLQAKGDALQRADISLAEAVKRIMHLPAVAEKTFLITIGDRTVTGMVTRDQMVGPWQIPVADCAVTSASLDSYYGEAMSLGERAPVALLDFAASARLAVGEALTNIAATQIGELKRIKLSANWMSAAGHPGEDAGLYDAVRAVGEELCPALEITIPVGKDSMSMKTRWQEGHEQREMTSPLSLVITAFARIEDVRRTVTPQLRTDKGDNALLLIDLGAGHNALGATALTQVYRQLGDKPADVRNVQQLAGFFNAMQRLVADQHLLAYHDRSDGGLLVTLAEMAFAGHCGVTVDIQSLGNDALAALFNEELGAVIQVRAEQRADVEKLLADHGLANCVHYLGRAVAGDTFDIRSGTDVVYSEKRSTLRLWWAETSWQMQRLRDNPDCADQEHQAKQDESDPGLNVKLTFDPAEDIAAPFILKQARPKVAVLREQGVNSHVEMAAAFHRAGFDAVDVHMSDLLAGRTDLQSFQTLVACGGFSYGDVLGAGEGWAKSILFNDRVRDEFEAFFHRPTTLALGVCNGCQMMSNLRELIPGAEHWPRFVRNLSDSFEARFSLVEVASSPSLFMQDMVGSRMPIAVSHGEGQVEVRDAAHLAALEQSHLVALRFVNNHGVVTEQYPANPNGSANGITAVTSVSGRATVMMPHPERVFRTVSNSWHPEEWGEDSPWMRMFRNARKQLG.

Residues 304–323 are disordered; that stretch reads WPGAATGSGGEIRDEGATGR. Residues 306–317 and alanine 677 contribute to the ATP site; that span reads GAATGSGGEIRD. Positions 678, 717, 721, and 885 each coordinate Mg(2+). An ATP-binding site is contributed by serine 887. Over residues 1000-1013 the composition is skewed to basic and acidic residues; sequence PDCADQEHQAKQDE. Residues 1000-1019 are disordered; the sequence is PDCADQEHQAKQDESDPGLN. Residues 1043-1296 form the Glutamine amidotransferase type-1 domain; the sequence is VAVLREQGVN…MFRNARKQLG (254 aa). Cysteine 1136 functions as the Nucleophile in the catalytic mechanism. Active-site residues include histidine 1261 and glutamate 1263.

It in the N-terminal section; belongs to the FGAMS family. As to quaternary structure, monomer.

The protein resides in the cytoplasm. The enzyme catalyses N(2)-formyl-N(1)-(5-phospho-beta-D-ribosyl)glycinamide + L-glutamine + ATP + H2O = 2-formamido-N(1)-(5-O-phospho-beta-D-ribosyl)acetamidine + L-glutamate + ADP + phosphate + H(+). The protein operates within purine metabolism; IMP biosynthesis via de novo pathway; 5-amino-1-(5-phospho-D-ribosyl)imidazole from N(2)-formyl-N(1)-(5-phospho-D-ribosyl)glycinamide: step 1/2. Its function is as follows. Phosphoribosylformylglycinamidine synthase involved in the purines biosynthetic pathway. Catalyzes the ATP-dependent conversion of formylglycinamide ribonucleotide (FGAR) and glutamine to yield formylglycinamidine ribonucleotide (FGAM) and glutamate. The sequence is that of Phosphoribosylformylglycinamidine synthase from Yersinia pestis bv. Antiqua (strain Antiqua).